Consider the following 347-residue polypeptide: Protein RecA (347 aa).

64–71 (GPESSGKT) contacts ATP.

This sequence belongs to the RecA family.

It is found in the cytoplasm. In terms of biological role, can catalyze the hydrolysis of ATP in the presence of single-stranded DNA, the ATP-dependent uptake of single-stranded DNA by duplex DNA, and the ATP-dependent hybridization of homologous single-stranded DNAs. It interacts with LexA causing its activation and leading to its autocatalytic cleavage. The sequence is that of Protein RecA from Bartonella henselae (strain ATCC 49882 / DSM 28221 / CCUG 30454 / Houston 1) (Rochalimaea henselae).